The chain runs to 574 residues: Membrane protein insertase YidC (574 aa).

Transmembrane regions (helical) follow at residues 6–26 (VFLI…WGKE), 350–370 (VIDY…FWVL), 376–396 (FLHN…LVLY), 447–467 (GGCL…WVLV), 491–511 (FILP…TPTP), and 525–545 (PLVF…YWVV).

Belongs to the OXA1/ALB3/YidC family. Type 1 subfamily. Interacts with the Sec translocase complex via SecD. Specifically interacts with transmembrane segments of nascent integral membrane proteins during membrane integration.

It localises to the cell inner membrane. Functionally, required for the insertion and/or proper folding and/or complex formation of integral membrane proteins into the membrane. Involved in integration of membrane proteins that insert both dependently and independently of the Sec translocase complex, as well as at least some lipoproteins. Aids folding of multispanning membrane proteins. The protein is Membrane protein insertase YidC of Xanthomonas oryzae pv. oryzae (strain KACC10331 / KXO85).